The primary structure comprises 372 residues: Queuine tRNA-ribosyltransferase (372 aa).

The Proton acceptor role is filled by Asp-89. Substrate-binding positions include 89–93, Asp-161, and Gly-232; that span reads DSGGF. The segment at 262-268 is RNA binding; it reads GIGDLPS. The active-site Nucleophile is Asp-281. An RNA binding; important for wobble base 34 recognition region spans residues 286 to 290; sequence TKAAR. Residues Cys-319, Cys-321, Cys-324, and His-351 each contribute to the Zn(2+) site.

The protein belongs to the queuine tRNA-ribosyltransferase family. As to quaternary structure, homodimer. Within each dimer, one monomer is responsible for RNA recognition and catalysis, while the other monomer binds to the replacement base PreQ1. The cofactor is Zn(2+).

It carries out the reaction 7-aminomethyl-7-carbaguanine + guanosine(34) in tRNA = 7-aminomethyl-7-carbaguanosine(34) in tRNA + guanine. It participates in tRNA modification; tRNA-queuosine biosynthesis. Its function is as follows. Catalyzes the base-exchange of a guanine (G) residue with the queuine precursor 7-aminomethyl-7-deazaguanine (PreQ1) at position 34 (anticodon wobble position) in tRNAs with GU(N) anticodons (tRNA-Asp, -Asn, -His and -Tyr). Catalysis occurs through a double-displacement mechanism. The nucleophile active site attacks the C1' of nucleotide 34 to detach the guanine base from the RNA, forming a covalent enzyme-RNA intermediate. The proton acceptor active site deprotonates the incoming PreQ1, allowing a nucleophilic attack on the C1' of the ribose to form the product. After dissociation, two additional enzymatic reactions on the tRNA convert PreQ1 to queuine (Q), resulting in the hypermodified nucleoside queuosine (7-(((4,5-cis-dihydroxy-2-cyclopenten-1-yl)amino)methyl)-7-deazaguanosine). The chain is Queuine tRNA-ribosyltransferase from Chlamydia trachomatis serovar L2 (strain ATCC VR-902B / DSM 19102 / 434/Bu).